The primary structure comprises 344 residues: Protein AIR2 (344 aa).

A disordered region spans residues 1–23 (MEKNTAPFVVDTAPTTPPDKLVA). 2 positions are modified to phosphoserine: Ser31 and Ser49. 3 CCHC-type zinc fingers span residues 61-78 (PKCN…DCPH), 99-116 (IQCS…QCPH), and 162-179 (IYCY…DCKE). Disordered stretches follow at residues 227 to 274 (YDED…PTIR) and 312 to 344 (STYV…GKRR). Residues 317 to 337 (NNSISNSSNYRNYNSYQPYRS) are compositionally biased toward low complexity.

The protein belongs to the AIR1 family. As to quaternary structure, component of the TRAMP complex (also called TRF4 complex) composed of at least HUL4, MTR4, PAP2/TRF4 and either AIR1 or AIR2. Interacts with HMT1 and NPL3. The interaction with NPL3 requires the presence of HMT1. Interacts directly with PAP2.

The protein resides in the nucleus. Functionally, component of the TRAMP (TRF4) complex which has a poly(A) RNA polymerase activity and is involved in a post-transcriptional quality control mechanism limiting inappropriate expression of genetic information. Polyadenylation is required for the degradative activity of the exosome on several of its nuclear RNA substrates like cryptic transcripts generated by RNA polymerase II and III, or hypomethylated pre-tRNAi-Met. Both complexes polyadenylate RNA processing and degradation intermediates of snRNAs, snoRNAs and mRNAs that accumulate in strains lacking a functional exosome. AIR2 also inhibits the methylation of NPL3 mediated by HMT1 through its interaction with HMT1. The protein is Protein AIR2 (AIR2) of Saccharomyces cerevisiae (strain ATCC 204508 / S288c) (Baker's yeast).